The sequence spans 178 residues: MKNLPNYLTIARIMVIPVIILLFYINNSLARKLGALLFVLASITDFFDGYIARKYNLVTSFGKMFDPIADKLLVGCVTIMLLKKDNVDEIPCLLILAREFLVSGLREFLALVKVSVPVSRLAKLKTFLQMFALSILILGSKGSGIIYLDIVGEIILWIAAFLTIITGYSYFKACKTYF.

The next 4 membrane-spanning stretches (helical) occupy residues 5 to 25, 32 to 52, 61 to 81, and 145 to 165; these read PNYLTIARIMVIPVIILLFYI, KLGALLFVLASITDFFDGYIA, FGKMFDPIADKLLVGCVTIML, and IIYLDIVGEIILWIAAFLTII.

The protein belongs to the CDP-alcohol phosphatidyltransferase class-I family.

Its subcellular location is the cell membrane. It catalyses the reaction a CDP-1,2-diacyl-sn-glycerol + sn-glycerol 3-phosphate = a 1,2-diacyl-sn-glycero-3-phospho-(1'-sn-glycero-3'-phosphate) + CMP + H(+). Its pathway is phospholipid metabolism; phosphatidylglycerol biosynthesis; phosphatidylglycerol from CDP-diacylglycerol: step 1/2. This protein catalyzes the committed step to the synthesis of the acidic phospholipids. This chain is CDP-diacylglycerol--glycerol-3-phosphate 3-phosphatidyltransferase (pgsA), found in Rickettsia typhi (strain ATCC VR-144 / Wilmington).